Consider the following 227-residue polypeptide: Cytidylate kinase (227 aa).

10-18 contacts ATP; that stretch reads GPASSGKST.

Belongs to the cytidylate kinase family. Type 1 subfamily.

It is found in the cytoplasm. It carries out the reaction CMP + ATP = CDP + ADP. The catalysed reaction is dCMP + ATP = dCDP + ADP. The chain is Cytidylate kinase from Streptococcus agalactiae serotype III (strain NEM316).